A 100-amino-acid polypeptide reads, in one-letter code: Large ribosomal subunit protein uL23 (100 aa).

It belongs to the universal ribosomal protein uL23 family. As to quaternary structure, part of the 50S ribosomal subunit. Contacts protein L29, and trigger factor when it is bound to the ribosome.

Its function is as follows. One of the early assembly proteins it binds 23S rRNA. One of the proteins that surrounds the polypeptide exit tunnel on the outside of the ribosome. Forms the main docking site for trigger factor binding to the ribosome. The chain is Large ribosomal subunit protein uL23 from Acaryochloris marina (strain MBIC 11017).